The sequence spans 847 residues: UPF0182 protein CYB_0372 (847 aa).

The next 7 membrane-spanning stretches (helical) occupy residues 7 to 27 (GLFL…LAAF), 51 to 71 (WGLG…NICS), 76 to 96 (ATLA…AGSL), 141 to 161 (FNLV…ELGL), 168 to 188 (LALS…LFLI), 220 to 240 (LPAT…FWAL), and 259 to 279 (WASS…FGLL).

Belongs to the UPF0182 family.

The protein resides in the cell membrane. The polypeptide is UPF0182 protein CYB_0372 (Synechococcus sp. (strain JA-2-3B'a(2-13)) (Cyanobacteria bacterium Yellowstone B-Prime)).